Here is a 95-residue protein sequence, read N- to C-terminus: Aspartyl/glutamyl-tRNA(Asn/Gln) amidotransferase subunit C (95 aa).

Belongs to the GatC family. As to quaternary structure, heterotrimer of A, B and C subunits.

The catalysed reaction is L-glutamyl-tRNA(Gln) + L-glutamine + ATP + H2O = L-glutaminyl-tRNA(Gln) + L-glutamate + ADP + phosphate + H(+). The enzyme catalyses L-aspartyl-tRNA(Asn) + L-glutamine + ATP + H2O = L-asparaginyl-tRNA(Asn) + L-glutamate + ADP + phosphate + 2 H(+). In terms of biological role, allows the formation of correctly charged Asn-tRNA(Asn) or Gln-tRNA(Gln) through the transamidation of misacylated Asp-tRNA(Asn) or Glu-tRNA(Gln) in organisms which lack either or both of asparaginyl-tRNA or glutaminyl-tRNA synthetases. The reaction takes place in the presence of glutamine and ATP through an activated phospho-Asp-tRNA(Asn) or phospho-Glu-tRNA(Gln). The sequence is that of Aspartyl/glutamyl-tRNA(Asn/Gln) amidotransferase subunit C from Desulforapulum autotrophicum (strain ATCC 43914 / DSM 3382 / VKM B-1955 / HRM2) (Desulfobacterium autotrophicum).